The sequence spans 156 residues: Small ribosomal subunit protein uS7 (156 aa).

It belongs to the universal ribosomal protein uS7 family. As to quaternary structure, part of the 30S ribosomal subunit. Contacts proteins S9 and S11.

In terms of biological role, one of the primary rRNA binding proteins, it binds directly to 16S rRNA where it nucleates assembly of the head domain of the 30S subunit. Is located at the subunit interface close to the decoding center, probably blocks exit of the E-site tRNA. The sequence is that of Small ribosomal subunit protein uS7 from Salmonella choleraesuis (strain SC-B67).